Here is a 325-residue protein sequence, read N- to C-terminus: Beta-1,3-galactosyltransferase 6 (325 aa).

Over 1 to 11 (MKVFRRAWRHR) the chain is Cytoplasmic. A helical; Signal-anchor for type II membrane protein transmembrane segment spans residues 12 to 30 (VALGLGGLAFCGTTLLYLA). Residues 31 to 325 (RCASEGETPS…QCCQRKEGVP (295 aa)) are Lumenal-facing. A glycan (N-linked (GlcNAc...) asparagine) is linked at Asn-127.

Belongs to the glycosyltransferase 31 family. Mn(2+) serves as cofactor.

The protein resides in the golgi apparatus. Its subcellular location is the golgi stack membrane. The enzyme catalyses 3-O-(beta-D-galactosyl-(1-&gt;4)-beta-D-xylosyl)-L-seryl-[protein] + UDP-alpha-D-galactose = 3-O-(beta-D-galactosyl-(1-&gt;3)-beta-D-galactosyl-(1-&gt;4)-beta-D-xylosyl)-L-seryl-[protein] + UDP + H(+). The protein operates within glycan metabolism; chondroitin sulfate biosynthesis. It functions in the pathway glycan metabolism; heparan sulfate biosynthesis. Beta-1,3-galactosyltransferase that transfers galactose from UDP-galactose to substrates with a terminal beta-linked galactose residue. Has a preference for galactose-beta-1,4-xylose that is found in the linker region of glycosaminoglycans, such as heparan sulfate and chondroitin sulfate. Has no activity towards substrates with terminal glucosamine or galactosamine residues. This is Beta-1,3-galactosyltransferase 6 (B3galt6) from Mus musculus (Mouse).